The following is a 423-amino-acid chain: MAKLTESMTNVLEGDSMDQDVESPVAIHQPKLPKQARDDLPRHISRDRTKRKIQRYVRKDGKCNVHHGNVRETYRYLTDIFTTLVDLKWRFNLLIFVMVYTVTWLFFGMIWWLIAYIRGDMDHIEDPSWTPCVTNLNGFVSAFLFSIETETTIGYGYRVITDKCPEGIILLLIQSVLGSIVNAFMVGCMFVKISQPKKRAETLVFSTHAVISMRDGKLCLMFRVGDLRNSHIVEASIRAKLIKSKQTSEGEFIPLNQTDINVGYYTGDDRLFLVSPLIISHEINQQSPFWEISKAQLPKEELEIVVILEGMVEATGMTCQARSSYITSEILWGYRFTPVLTLEDGFYEVDYNSFHETYETSTPSLSAKELAELASRAELPLSWSVSSKLNQHAELETEEEEKNLEEQTERNGDVANLENESKV.

Topologically, residues 1–89 are cytoplasmic; sequence MAKLTESMTN…IFTTLVDLKW (89 aa). Phosphoserine occurs at positions 16 and 23. Residues 90–114 form a helical membrane-spanning segment; sequence RFNLLIFVMVYTVTWLFFGMIWWLI. The Extracellular portion of the chain corresponds to 115-138; it reads AYIRGDMDHIEDPSWTPCVTNLNG. The segment at residues 139–150 is an intramembrane region (helical; Pore-forming); the sequence is FVSAFLFSIETE. An intramembrane region (pore-forming) is located at residues 151–157; it reads TTIGYGY. The Selectivity filter motif lies at 152–157; that stretch reads TIGYGY. Residues 158–166 are Extracellular-facing; that stretch reads RVITDKCPE. The helical transmembrane segment at 167-188 threads the bilayer; it reads GIILLLIQSVLGSIVNAFMVGC. Topologically, residues 189–423 are cytoplasmic; sequence MFVKISQPKK…VANLENESKV (235 aa). The tract at residues 390–423 is disordered; that stretch reads NQHAELETEEEEKNLEEQTERNGDVANLENESKV. The short motif at 420–423 is the PDZ-binding element; it reads ESKV.

It belongs to the inward rectifier-type potassium channel (TC 1.A.2.1) family. KCNJ6 subfamily. Associates with KCNJ3/GIRK1 or KCNJ5/GRIK4 to form a G-protein-activated heteromultimer pore-forming unit. The resulting inward current is much larger. Interacts (via PDZ-binding motif) with SNX27 (via PDZ domain); the interaction is required when endocytosed to prevent degradation in lysosomes and promote recycling to the plasma membrane. In terms of tissue distribution, most abundant in cerebellum, and to a lesser degree in islets and exocrine pancreas.

Its subcellular location is the membrane. It carries out the reaction K(+)(in) = K(+)(out). With respect to regulation, activated by phosphatidylinositol 4,5 biphosphate (PtdIns(4,5)P2). Functionally, inward rectifier potassium channels are characterized by a greater tendency to allow potassium to flow into the cell rather than out of it. Their voltage dependence is regulated by the concentration of extracellular potassium; as external potassium is raised, the voltage range of the channel opening shifts to more positive voltages. The inward rectification is mainly due to the blockage of outward current by internal magnesium. This potassium channel may be involved in the regulation of insulin secretion by glucose and/or neurotransmitters acting through G-protein-coupled receptors. In Homo sapiens (Human), this protein is G protein-activated inward rectifier potassium channel 2 (KCNJ6).